The chain runs to 509 residues: Glycogen synthase 2 (509 aa).

Lys15 lines the ADP-alpha-D-glucose pocket.

The protein belongs to the glycosyltransferase 1 family. Bacterial/plant glycogen synthase subfamily.

It catalyses the reaction [(1-&gt;4)-alpha-D-glucosyl](n) + ADP-alpha-D-glucose = [(1-&gt;4)-alpha-D-glucosyl](n+1) + ADP + H(+). It functions in the pathway glycan biosynthesis; glycogen biosynthesis. Functionally, synthesizes alpha-1,4-glucan chains using ADP-glucose. The polypeptide is Glycogen synthase 2 (glgA2) (Agrobacterium fabrum (strain C58 / ATCC 33970) (Agrobacterium tumefaciens (strain C58))).